Consider the following 327-residue polypeptide: Urease accessory protein 4 (327 aa).

N-linked (GlcNAc...) asparagine glycosylation occurs at asparagine 120. The chain crosses the membrane as a helical span at residues valine 239–tyrosine 259.

The protein belongs to the UreD family. URE4, URE6 and URE7 may form a complex that acts as a GTP-hydrolysis-dependent molecular chaperone, activating the urease apoprotein URE1.

The protein localises to the membrane. In terms of biological role, urease accessory protein required for the maturation and activation of urease via the functional incorporation of the urease nickel metallocenter. Plays a role in host brain invasion. This chain is Urease accessory protein 4, found in Cryptococcus neoformans var. grubii serotype A (strain H99 / ATCC 208821 / CBS 10515 / FGSC 9487) (Filobasidiella neoformans var. grubii).